The sequence spans 415 residues: uncharacterized protein (415 aa).

This is an uncharacterized protein from Escherichia coli (strain K12).